Consider the following 264-residue polypeptide: Type III pantothenate kinase (264 aa).

An ATP-binding site is contributed by 6-13 (DIGNTQTV). Residues Y100 and 107–110 (GADR) each bind substrate. D109 (proton acceptor) is an active-site residue. A K(+)-binding site is contributed by D129. T132 serves as a coordination point for ATP. T185 serves as a coordination point for substrate.

The protein belongs to the type III pantothenate kinase family. As to quaternary structure, homodimer. It depends on NH4(+) as a cofactor. The cofactor is K(+).

Its subcellular location is the cytoplasm. It catalyses the reaction (R)-pantothenate + ATP = (R)-4'-phosphopantothenate + ADP + H(+). Its pathway is cofactor biosynthesis; coenzyme A biosynthesis; CoA from (R)-pantothenate: step 1/5. Catalyzes the phosphorylation of pantothenate (Pan), the first step in CoA biosynthesis. In Rubrobacter xylanophilus (strain DSM 9941 / JCM 11954 / NBRC 16129 / PRD-1), this protein is Type III pantothenate kinase.